The following is a 505-amino-acid chain: ATP synthase subunit alpha (505 aa).

Position 169–176 (169–176 (GDRQIGKT)) interacts with ATP.

This sequence belongs to the ATPase alpha/beta chains family. As to quaternary structure, F-type ATPases have 2 components, CF(1) - the catalytic core - and CF(0) - the membrane proton channel. CF(1) has five subunits: alpha(3), beta(3), gamma(1), delta(1), epsilon(1). CF(0) has three main subunits: a(1), b(2) and c(9-12). The alpha and beta chains form an alternating ring which encloses part of the gamma chain. CF(1) is attached to CF(0) by a central stalk formed by the gamma and epsilon chains, while a peripheral stalk is formed by the delta and b chains.

Its subcellular location is the cell inner membrane. It carries out the reaction ATP + H2O + 4 H(+)(in) = ADP + phosphate + 5 H(+)(out). Functionally, produces ATP from ADP in the presence of a proton gradient across the membrane. The alpha chain is a regulatory subunit. This is ATP synthase subunit alpha from Desulfatibacillum aliphaticivorans.